A 105-amino-acid chain; its full sequence is MYVIVDIQGQQMKVEQGRRLFVHHIKDVESGASVEFDKVLLVDNNGAITVGSPLVEGAKVVCEVLTPLVKGDKVLIFHKKRRKGYRKLNGHRQQFTEILVKEVVA.

It belongs to the bacterial ribosomal protein bL21 family. Part of the 50S ribosomal subunit. Contacts protein L20.

This protein binds to 23S rRNA in the presence of protein L20. This is Large ribosomal subunit protein bL21 from Porphyromonas gingivalis (strain ATCC BAA-308 / W83).